The chain runs to 139 residues: Large ribosomal subunit protein uL13c (139 aa).

Belongs to the universal ribosomal protein uL13 family. As to quaternary structure, part of the 50S ribosomal subunit.

The protein localises to the plastid. The protein resides in the chloroplast. This is Large ribosomal subunit protein uL13c from Trieres chinensis (Marine centric diatom).